A 126-amino-acid polypeptide reads, in one-letter code: UPF0538 protein C2orf76 (126 aa).

It belongs to the UPF0538 family.

The protein is UPF0538 protein C2orf76 (C2orf76) of Homo sapiens (Human).